Reading from the N-terminus, the 310-residue chain is ADP-L-glycero-D-manno-heptose-6-epimerase (310 aa).

NADP(+)-binding positions include 10–11 (FI), 31–32 (DN), Lys-38, Lys-53, 75–79 (EGACS), and Asn-92. Tyr-140 (proton acceptor) is an active-site residue. Lys-144 lines the NADP(+) pocket. Asn-169 lines the substrate pocket. NADP(+) is bound by residues Val-170 and Lys-178. Lys-178 (proton acceptor) is an active-site residue. Residues Ser-180, His-187, 201-204 (FEGS), Arg-209, and Tyr-272 each bind substrate.

It belongs to the NAD(P)-dependent epimerase/dehydratase family. HldD subfamily. In terms of assembly, homopentamer. NADP(+) serves as cofactor.

The catalysed reaction is ADP-D-glycero-beta-D-manno-heptose = ADP-L-glycero-beta-D-manno-heptose. The protein operates within nucleotide-sugar biosynthesis; ADP-L-glycero-beta-D-manno-heptose biosynthesis; ADP-L-glycero-beta-D-manno-heptose from D-glycero-beta-D-manno-heptose 7-phosphate: step 4/4. Its function is as follows. Catalyzes the interconversion between ADP-D-glycero-beta-D-manno-heptose and ADP-L-glycero-beta-D-manno-heptose via an epimerization at carbon 6 of the heptose. This is ADP-L-glycero-D-manno-heptose-6-epimerase from Salmonella dublin (strain CT_02021853).